Consider the following 300-residue polypeptide: Geranylgeranyl pyrophosphate synthase (300 aa).

Residue M1 is modified to N-acetylmethionine. Residues K25, R28, and H57 each contribute to the isopentenyl diphosphate site. Positions 64 and 68 each coordinate Mg(2+). R73 provides a ligand contact to dimethylallyl diphosphate. Position 74 (R74) interacts with isopentenyl diphosphate. K151, T152, Q185, K202, and K212 together coordinate dimethylallyl diphosphate.

Belongs to the FPP/GGPP synthase family. In terms of assembly, homohexamer; trimer of homodimers. Requires Mg(2+) as cofactor.

The protein resides in the cytoplasm. It is found in the perinuclear region. Its subcellular location is the myofibril. The protein localises to the sarcomere. It localises to the z line. The catalysed reaction is isopentenyl diphosphate + dimethylallyl diphosphate = (2E)-geranyl diphosphate + diphosphate. The enzyme catalyses isopentenyl diphosphate + (2E)-geranyl diphosphate = (2E,6E)-farnesyl diphosphate + diphosphate. It catalyses the reaction isopentenyl diphosphate + (2E,6E)-farnesyl diphosphate = (2E,6E,10E)-geranylgeranyl diphosphate + diphosphate. Its pathway is isoprenoid biosynthesis; farnesyl diphosphate biosynthesis; farnesyl diphosphate from geranyl diphosphate and isopentenyl diphosphate: step 1/1. It functions in the pathway isoprenoid biosynthesis; geranyl diphosphate biosynthesis; geranyl diphosphate from dimethylallyl diphosphate and isopentenyl diphosphate: step 1/1. The protein operates within isoprenoid biosynthesis; geranylgeranyl diphosphate biosynthesis; geranylgeranyl diphosphate from farnesyl diphosphate and isopentenyl diphosphate: step 1/1. In terms of biological role, catalyzes the trans-addition of the three molecules of IPP onto DMAPP to form geranylgeranyl pyrophosphate, an important precursor of carotenoids and geranylated proteins. The sequence is that of Geranylgeranyl pyrophosphate synthase (Ggps1) from Rattus norvegicus (Rat).